Here is an 888-residue protein sequence, read N- to C-terminus: Villin-like protein quail (888 aa).

A Gelsolin-like repeat occupies 307 to 366; that stretch reads GVYLLDNYGQSIWLWVGGQAPQADALSAMGNGRAFVKKKKYPDNTLVVRVLEGHEPVEFK. In terms of domain architecture, HP spans 823-888; sequence FDGHKKYPLT…MELKKQFKLF (66 aa).

This sequence belongs to the villin/gelsolin family. As to expression, germline specific in adult flies.

Required for the formation of cytoplasmic actin filament bundles in nurse cells, possibly by regulating both the polymerization and organization of actin filaments. Mutations in quail result in female sterility due to the disruption of cytoplasmic transport from the nurse cells into the oocyte late in oogenesis. The sequence is that of Villin-like protein quail (qua) from Drosophila melanogaster (Fruit fly).